The sequence spans 549 residues: Glucose-6-phosphate isomerase (549 aa).

E355 (proton donor) is an active-site residue. Residues H386 and K514 contribute to the active site.

Belongs to the GPI family.

Its subcellular location is the cytoplasm. The catalysed reaction is alpha-D-glucose 6-phosphate = beta-D-fructose 6-phosphate. Its pathway is carbohydrate biosynthesis; gluconeogenesis. It participates in carbohydrate degradation; glycolysis; D-glyceraldehyde 3-phosphate and glycerone phosphate from D-glucose: step 2/4. In terms of biological role, catalyzes the reversible isomerization of glucose-6-phosphate to fructose-6-phosphate. The polypeptide is Glucose-6-phosphate isomerase (Cronobacter sakazakii (strain ATCC BAA-894) (Enterobacter sakazakii)).